A 172-amino-acid chain; its full sequence is Crossover junction endodeoxyribonuclease RuvC (172 aa).

Active-site residues include aspartate 11, glutamate 70, and aspartate 142. Aspartate 11, glutamate 70, and aspartate 142 together coordinate Mg(2+).

The protein belongs to the RuvC family. Homodimer which binds Holliday junction (HJ) DNA. The HJ becomes 2-fold symmetrical on binding to RuvC with unstacked arms; it has a different conformation from HJ DNA in complex with RuvA. In the full resolvosome a probable DNA-RuvA(4)-RuvB(12)-RuvC(2) complex forms which resolves the HJ. The cofactor is Mg(2+).

The protein resides in the cytoplasm. It catalyses the reaction Endonucleolytic cleavage at a junction such as a reciprocal single-stranded crossover between two homologous DNA duplexes (Holliday junction).. Functionally, the RuvA-RuvB-RuvC complex processes Holliday junction (HJ) DNA during genetic recombination and DNA repair. Endonuclease that resolves HJ intermediates. Cleaves cruciform DNA by making single-stranded nicks across the HJ at symmetrical positions within the homologous arms, yielding a 5'-phosphate and a 3'-hydroxyl group; requires a central core of homology in the junction. The consensus cleavage sequence is 5'-(A/T)TT(C/G)-3'. Cleavage occurs on the 3'-side of the TT dinucleotide at the point of strand exchange. HJ branch migration catalyzed by RuvA-RuvB allows RuvC to scan DNA until it finds its consensus sequence, where it cleaves and resolves the cruciform DNA. This Hydrogenovibrio crunogenus (strain DSM 25203 / XCL-2) (Thiomicrospira crunogena) protein is Crossover junction endodeoxyribonuclease RuvC.